We begin with the raw amino-acid sequence, 1425 residues long: MSDDVNSSATSTSSSTVHFDDTPFEDVYEIETELGSGQFAVVRRVRDRKTGEKYAAKFIKKRRYATSRRGVTRQNIEREVRVLQKIRGNSNVVELHAVYETASDVIIVLELVSGGELFDHVCAKECLDEVEAAAFIKQILLAVRHLHSLHIVHLDIKPENVMLKQRGDSQIKIIDFGLSREIEPGAVVKDMVGTPEFVAPEVVNYEALSPATDMWAVGVVTYILLSGGSPFLGDNRDETFSNITRVRYHFSDRYFKNTSKHAKDFIYRLFVRDVDQRATVEECLQHPWIRGPEGNAIDIRKASCITISHIQSFKTRQRWKRCVELVMVLLKASKSSRRIGDGRFDEEDMVASCTLICAEEGNLRALHKLSALHKLLPNATRKSLKSSFSEPNGATAMHCAAKYGHAEVFNYFHMKGGNICARDDNGDTPLHVACRFAQHTVAGYVANEKIDVDSINKTGETALHCAVESADTRVVRLLLQLRPRLDLPNASGDTVLHLAADSINPRIVPLLVCLAPPLHLRNIREETPLHVAAARGHVDCVQALLDANSPIDAVEQDGKTALIIALENGNVDIASILITNGCDINHADHHGDTALHIASKHGLLQAVQTLCHCAVTVDSVNANKKTALHLAAHYGHVDIIRVLLLARADVTLRGDDGLTAELVAVAAERLEAHSLLKMVKSQEIREEYISQLYPLDTSLRRIKLKLLGHSQSGKTRLVQTLHSSRGISSFLESVTRRISDHYSPSSSMKDDGIHSTNGSFVSESNNNSSFDLAAAAGSKYAPPHSQYTRGIDVQTVNINGCGEFSVWEFGGYEPMHTCYDHFVGNADCIHLILYRTSDPTEVQYKQILYWMNFLKGRVTPFEPIGHCGFSSRRSKVIIVGTHATSSLFPQMNQEGEYVSSDIEAMLNTVRLRFETHFDMDHRLILLDATNPSCIGMKTLKMELAKCRTNILAKLLKPLAILDTVVNHLNLVRKKHANFPVITWPDFIQLVRNEINPLTGDAHCRQIVQQLQLIGELVYLRNDLCDADYVVLNAEWFGTHILGQLLSAEFLSKASPNGSYHTSSLAKIFPEIPEQSDLMTILEVLQLCAPDARTGAHEFPVFIQTEAPDSIWRPYSLKEKERDTVYGGVRILPMRGMERSLHSTFPRIQVALRRSINDYQPAKDTQLHQWSECSKLVSQDREAVIRMVGDAVEIRARGPSESATSMFYFMEDLINLVEHAAAEVGPGISLERHFISPKHLKEHREHPALFPPESMMEMQQRESLSVKGTQDEEELFTDVVCFGSRDVARHLTLGIDVGVADLQMASRCELACLLDPPHAMGRDWSILAVKLQLTDQVPDVDSTGQSLSRTDQLLNEWAIHHPEQASVGNLCRILVELGRCDARDALYRTVPLYVFAPLEDQFLLETNDSGVVSSCHSSSEHNPINI.

Residues 28–289 enclose the Protein kinase domain; the sequence is YEIETELGSG…VEECLQHPWI (262 aa). ATP contacts are provided by residues 34–42 and K57; that span reads LGSGQFAVV. The active-site Proton acceptor is the D155. ANK repeat units follow at residues 392–421, 425–454, 458–487, 491–520, 524–553, 557–586, 590–619, 623–652, 810–841, and 934–963; these read NGAT…NICA, NGDT…DVDS, TGET…RLDL, SGDT…PLHL, REET…PIDA, DGKT…DINH, HGDT…TVDS, NKKT…DVTL, GGYE…DPTE, and IGMK…ILDT. The 256-residue stretch at 695–950 folds into the Roc domain; sequence LDTSLRRIKL…MELAKCRTNI (256 aa). The 82-residue stretch at 1308–1389 folds into the Death domain; that stretch reads ELACLLDPPH…DARDALYRTV (82 aa).

It belongs to the protein kinase superfamily. CAMK Ser/Thr protein kinase family. DAP kinase subfamily. Interacts with ptrn-1. Requires Mg(2+) as cofactor. As to expression, expressed in epidermis, muscles and neurons.

The protein localises to the cytoplasm. The protein resides in the cytosol. Its subcellular location is the cytoskeleton. It catalyses the reaction L-seryl-[protein] + ATP = O-phospho-L-seryl-[protein] + ADP + H(+). It carries out the reaction L-threonyl-[protein] + ATP = O-phospho-L-threonyl-[protein] + ADP + H(+). In terms of biological role, negative regulator of epidermal barrier repair and innate immune responses to wounding. The role in epidermal tissue integrity and wound healing is established through the inhibition of epidermal microtubule stability, possibly via the negative regulation of the microtubule minus-end binding protein ptrn-1. In epidermis, prevents expression of specific unc-44 isoforms probably by promoting nuclear localization of pinn-1, which in turn may affect sydn-1-ssup-72-mediated regulation of alternative polyadenylation of unc-44 mRNA. Appears to act downstream of or in parallel to muscarinic signaling in the regulation of autophagy. The chain is Death-associated protein kinase dapk-1 from Caenorhabditis elegans.